The sequence spans 702 residues: MFENTKKALETFRTAIECVKCKKPRGDLQYLGSSCKHAYCWECIATFQQKPSGKRSSVARHMCPSCAFPLDTSKITEAHMLKTCFDTLSELNDLLQKVGTTSLTQAEFACTQNIFNKEKTPADAVEKFLETQAHMPDEMGQLGEEDDDLMCKDENRENSNSPELDIFHDYSKEASPTRNSTKRPSTVSVHERKPKRSSILKTSVKNEPAAPVVDLFASQVPQRTHQNDLLTPFIERRSTAPAATGVATYAQAFGSSSNPVKAEIIEEDIFSKAIPLTKRQASMSASAKKQPKLEPEEPEEVPSTSRSRKNSIKSDKIERRSQSPMSFGEKSMSVKSEQRRSSYGTRRGEAVLVNSIRNNRIPQLRSAVEAGTCVNEKEDGKTPLYVAVENSSLEAVKILVEAGAVINASCGSTLETTLHEAVRRQNTQIVEYLLSKGASIKIRNIAGKTVEEMAKSDPKIRKIIEKFKTEQRVLQPVVAPPKSRLHFVQLIDEKMLTESEKRKLPGKINIVPADMDSPTHVVVTVDLKTRVLNINKEHIGEILKAIIKSGMIVSRDWLRACIIDPSKVDDDRSYMVQKVRWMEGEVFENTIEQWKKTITKMQPKLFAGCKFFIPKPKYNFLDRPALFEIIRSAGGQAAAREPIIDEKDPPPYHNANLKPNFVLYSLTHDIGDKFRDCTKYNLVSEQWLIEAILGCSITTPPH.

An RING-type zinc finger spans residues 18–67 (CVKCKKPRGDLQYLGSSCKHAYCWECIATFQQKPSGKRSSVARHMCPSCA). 2 disordered regions span residues 153 to 205 (DENR…TSVK) and 281 to 346 (ASMS…YGTR). Polar residues predominate over residues 174–188 (ASPTRNSTKRPSTVS). Positions 312–321 (IKSDKIERRS) are enriched in basic and acidic residues. ANK repeat units lie at residues 347-376 (RGEA…CVNE), 379-408 (DGKT…VINA), and 413-442 (TLET…SIKI). A BRCT domain is found at 601 to 702 (MQPKLFAGCK…LGCSITTPPH (102 aa)).

As to quaternary structure, heterodimer (via RING-type zinc finger) with brc-1 to form the core CeBCD complex. Brc-1-brd-1 heterodimer-containing CeBCD complexes bound to chromatin are activated as an E3-ubiquitin ligase in response to DNA damage. The heterodimer interacts with the recombinase rad-51 following ionizing irradiation; the interaction is direct. The heterodimer interacts the E2-ubiquitin-conjugating enzyme let-70 following ionizing irradiation. The heterodimer interacts with the pro-crossover proteins msh-5 and syp-3. Interacts with smt-3, tac-1 and ubc-9. Post-translationally, autoubiquitinated. In terms of processing, phosphorylation of CeBCD complexes is required for E3 ubiquitin-protein ligase activity.

It is found in the cytoplasm. The protein resides in the nucleus. The protein localises to the chromosome. It catalyses the reaction S-ubiquitinyl-[E2 ubiquitin-conjugating enzyme]-L-cysteine + [acceptor protein]-L-lysine = [E2 ubiquitin-conjugating enzyme]-L-cysteine + N(6)-ubiquitinyl-[acceptor protein]-L-lysine.. Its pathway is protein modification; protein ubiquitination. E3 ubiquitin-protein ligase activity of CeBCD complexes occurs at DNA damage sites. Following DNA damage, E3 ubiquitin-protein ligase activity is reduced by caffeine treatment (inhibitor of ATM and ATK kinase activity). Its function is as follows. Constituent of the CeBCD complex that possesses E3 ubiquitin-protein ligase activity. When bound to chromatin, the brc-1-brd-1 heterodimer within the CeBCD complex is inactive during normal conditions, but in response to DNA damage, the brc-1-brd-1 heterodimer associates with other proteins such as the recombinase rad-51 or the E2-ubiquitin-conjugating enzyme let-70, which activate the CeBCD complex as an E3-ubiquitin ligase. Moreover, association between the brc-1-brd-1 heterodimer and rad-51 and let-70, probably requires DNA checkpoint proteins such as atl-1 and mre-11 in order to induce ubiquitination at DNA damage sites. To this end, the brc-1-brd-1 heterodimer coordinates a diverse range of cellular pathways such as DNA damage repair, ubiquitination and transcriptional regulation to maintain genomic stability. Plays a role in triggering cellular responses at damage sites in response to DNA damage that may be induced by ionizing radiation for example. In particular, protects against chromosome non-disjunction and nuclear fragmentation during meiotic double-strand break repair to ensure sister chromatid recombination and aid chromosome stability. The sequence is that of BRCA1-associated RING domain protein 1 from Caenorhabditis elegans.